The primary structure comprises 207 residues: Protein 6b (207 aa).

The disordered stretch occupies residues G160–E183. A compositionally biased stretch (acidic residues) spans E164 to E178.

In terms of biological role, involved in tumor formation and increases auxin and cytokinin effects in host plants. In Agrobacterium tumefaciens (strain Ach5), this protein is Protein 6b (6b).